The following is a 393-amino-acid chain: LL-diaminopimelate aminotransferase (393 aa).

Substrate is bound by residues Y14 and G41. Residues Y71, 104–105, Y128, N174, Y205, and 233–235 each bind pyridoxal 5'-phosphate; these read AK and SFS. Positions 105, 128, and 174 each coordinate substrate. At K236 the chain carries N6-(pyridoxal phosphate)lysine. Residues R244 and N275 each contribute to the pyridoxal 5'-phosphate site. Substrate-binding residues include N275 and R369.

It belongs to the class-I pyridoxal-phosphate-dependent aminotransferase family. LL-diaminopimelate aminotransferase subfamily. As to quaternary structure, homodimer. The cofactor is pyridoxal 5'-phosphate.

It catalyses the reaction (2S,6S)-2,6-diaminopimelate + 2-oxoglutarate = (S)-2,3,4,5-tetrahydrodipicolinate + L-glutamate + H2O + H(+). The protein operates within amino-acid biosynthesis; L-lysine biosynthesis via DAP pathway; LL-2,6-diaminopimelate from (S)-tetrahydrodipicolinate (aminotransferase route): step 1/1. Its function is as follows. Involved in the synthesis of meso-diaminopimelate (m-DAP or DL-DAP), required for both lysine and peptidoglycan biosynthesis. Catalyzes the direct conversion of tetrahydrodipicolinate to LL-diaminopimelate. In Chlamydia muridarum (strain MoPn / Nigg), this protein is LL-diaminopimelate aminotransferase.